The following is a 392-amino-acid chain: F-box only protein 5-A (392 aa).

The tract at residues 1–21 (MMCGFASNQSPKKLSSKKSSA) is disordered. A compositionally biased stretch (low complexity) spans 7-20 (SNQSPKKLSSKKSS). Positions 197 to 244 (AELFHRDFKHLLTKILRHLSAMDLINVISVSTTWRKLLQKDNWAYNAY) constitute an F-box domain. Residues 319-367 (SLKVCVDCGSPAKHDPCLHRAICTRESCKLDFCTRCSCKYHFSKSCLMS) form a ZBR-type zinc finger. Zn(2+) contacts are provided by C323, C326, C341, C346, C351, C354, H359, and C364.

Part of a SCF (SKP1-cullin-F-box) protein ligase complex. Interacts with btrc. Interacts with skp1. Interacts with cdc20. Interacts with pin1; stabilizes fbxo5 by preventing its association with btrc in an isomerization-dependent pathway; this interaction is present during G2 phase and prevents fbxo5 degradation. Interacts with plk1. Post-translationally, proteolysed; proteolysis is induced by both cyclin B-cdk1 and cyclin A-cdk1/2 complex through probable phosphorylation. Proteolysis is inhibited by pin1 during G2.

It localises to the nucleus. The protein localises to the cytoplasm. It is found in the cytoskeleton. Its subcellular location is the spindle. The protein resides in the microtubule organizing center. It localises to the centrosome. Its pathway is protein modification; protein ubiquitination. Its function is as follows. Regulates progression through early mitosis by inhibiting the anaphase promoting complex/cyclosome (APC). Binds to the APC activator cdc20 to prevent APC activation. Can also bind directly to the APC to inhibit substrate-binding. Required to arrest unfertilized eggs at metaphase of meiosis II, by preventing their release from metaphase of meiosis II, through inhibition of APC-dependent cyclin B destruction leading to stabilization of cyclin B-cdk1 complex activity. This Xenopus laevis (African clawed frog) protein is F-box only protein 5-A (fbxo5-a).